A 390-amino-acid chain; its full sequence is MRRILYLEPVGGIAGDMFLAAGLDLGISPAELERALSGLRVPGWKLAVSRAVRHAISGTHLDVVLDAREAHPHRAYADIRRLIEEADTLPPRAKERALAVFRAIGEAEAKVHGVSIDDIHFHEVGAVDSIVDICGAAVVLELLGNPEVHAAPPPLGSGTIRVAHGAMPIPVPATLELLRDVPVRFEGVGELTTPTGAALLKVLAHIGHPPDFIVEKVGYGVGTKDFKDRPNVLRASLGRLEQASNEGLWVVEANLDDATPQLLGHLLERLLAVGALDAWVTPVVMKKSRPGHLLSALVEGGTREAIVDVVLRESTTLGVRYHRVERQALERDWVEVETPWGKVRVKRGLRQGAVLNAHPEFEDCRQVAEAAGVPVKQVMAAAVAALGPKD.

This sequence belongs to the LarC family.

This Myxococcus xanthus (strain DK1622) protein is Putative nickel insertion protein.